A 64-amino-acid polypeptide reads, in one-letter code: Large ribosomal subunit protein uL29 (64 aa).

The protein belongs to the universal ribosomal protein uL29 family.

In Chloroherpeton thalassium (strain ATCC 35110 / GB-78), this protein is Large ribosomal subunit protein uL29.